The primary structure comprises 392 residues: Queuine tRNA-ribosyltransferase (392 aa).

Residue aspartate 93 is the Proton acceptor of the active site. Substrate contacts are provided by residues 93 to 97, aspartate 147, glutamine 189, and glycine 216; that span reads DSGGY. The segment at 247–253 is RNA binding; sequence GVGAPED. Aspartate 266 functions as the Nucleophile in the catalytic mechanism. The RNA binding; important for wobble base 34 recognition stretch occupies residues 271–275; sequence TRVAR. Residues cysteine 304, cysteine 306, cysteine 309, and histidine 335 each coordinate Zn(2+).

It belongs to the queuine tRNA-ribosyltransferase family. Homodimer. Within each dimer, one monomer is responsible for RNA recognition and catalysis, while the other monomer binds to the replacement base PreQ1. Zn(2+) serves as cofactor.

The catalysed reaction is 7-aminomethyl-7-carbaguanine + guanosine(34) in tRNA = 7-aminomethyl-7-carbaguanosine(34) in tRNA + guanine. The protein operates within tRNA modification; tRNA-queuosine biosynthesis. Its function is as follows. Catalyzes the base-exchange of a guanine (G) residue with the queuine precursor 7-aminomethyl-7-deazaguanine (PreQ1) at position 34 (anticodon wobble position) in tRNAs with GU(N) anticodons (tRNA-Asp, -Asn, -His and -Tyr). Catalysis occurs through a double-displacement mechanism. The nucleophile active site attacks the C1' of nucleotide 34 to detach the guanine base from the RNA, forming a covalent enzyme-RNA intermediate. The proton acceptor active site deprotonates the incoming PreQ1, allowing a nucleophilic attack on the C1' of the ribose to form the product. After dissociation, two additional enzymatic reactions on the tRNA convert PreQ1 to queuine (Q), resulting in the hypermodified nucleoside queuosine (7-(((4,5-cis-dihydroxy-2-cyclopenten-1-yl)amino)methyl)-7-deazaguanosine). This Dehalococcoides mccartyi (strain ATCC BAA-2266 / KCTC 15142 / 195) (Dehalococcoides ethenogenes (strain 195)) protein is Queuine tRNA-ribosyltransferase.